A 213-amino-acid polypeptide reads, in one-letter code: 3,4-dihydroxy-2-butanone 4-phosphate synthase (213 aa).

D-ribulose 5-phosphate-binding positions include 37-38 (RE), aspartate 42, 150-154 (RSGHT), and glutamate 174. Glutamate 38 is a Mg(2+) binding site. Residue histidine 153 coordinates Mg(2+).

Belongs to the DHBP synthase family. As to quaternary structure, homodimer. Mg(2+) is required as a cofactor. Requires Mn(2+) as cofactor.

It catalyses the reaction D-ribulose 5-phosphate = (2S)-2-hydroxy-3-oxobutyl phosphate + formate + H(+). Its pathway is cofactor biosynthesis; riboflavin biosynthesis; 2-hydroxy-3-oxobutyl phosphate from D-ribulose 5-phosphate: step 1/1. Catalyzes the conversion of D-ribulose 5-phosphate to formate and 3,4-dihydroxy-2-butanone 4-phosphate. The sequence is that of 3,4-dihydroxy-2-butanone 4-phosphate synthase from Blochmanniella floridana.